A 481-amino-acid chain; its full sequence is MKAPDSPRYEFGGPLGATGIVFGLPILMQVLYLGCNDVSGCPAPALLDPKTLSWAKLKSQIPWPQEGLSGFMSWEVTRWLFAYYFLSLMLYRIMPAQIVLGTKLRESGKPLEYRFNSFSATVVQLTGCAIGTYIYGANFPVWTWITDHYIQLLTTSTVLTYIISIWTYLRSFSIKPGNPELREVAVGGRTGRVIYDYFIGRELNPRVTLPFFGEIDIKAWLEMRPGLTGWILLNCSFIAKQYRTYGFVSDSIVVIALIQAYYVLEGQYSEAGLLSMMDITSDGLGFMLTWGDIVWVPFLYSTQCRYLSVYPVHLGPIGVGAIGTVFCIGLYIFRSSNNQKALFRKDPNNPAFANMTYIQTKRGTKLLTGGWWGMARHVNYLGDWIQSLPFCLPTKAAGYVILPAGTAVAGAEVAKMLDGRLVTPGDAAPWGMLFTYLYSAWFGFLLIHRERRDDYACSEKYGKDWEEYKNKVRWRVLPGVY.

Transmembrane regions (helical) follow at residues 11–31 (FGGPLGATGIVFGLPILMQVL), 80–100 (LFAYYFLSLMLYRIMPAQIVL), 125–145 (LTGCAIGTYIYGANFPVWTWI), 149–169 (YIQLLTTSTVLTYIISIWTYL), 244–264 (TYGFVSDSIVVIALIQAYYVL), 279–299 (ITSDGLGFMLTWGDIVWVPFL), 313–333 (HLGPIGVGAIGTVFCIGLYIF), and 427–447 (AAPWGMLFTYLYSAWFGFLLI).

Belongs to the ERG4/ERG24 family.

The protein resides in the endoplasmic reticulum membrane. The catalysed reaction is 4,4-dimethyl-5alpha-cholesta-8,24-dien-3beta-ol + NADP(+) = 4,4-dimethyl-5alpha-cholesta-8,14,24-trien-3beta-ol + NADPH + H(+). The protein operates within steroid metabolism; ergosterol biosynthesis. Its function is as follows. Delta(14)-sterol reductase; part of the third module of ergosterol biosynthesis pathway that includes the late steps of the pathway. Catalyzes the reduction of the C14=C15 double bond within 4,4,24-trimethyl ergosta-8,14,24(28)-trienolto produce 4,4-dimethylfecosterol. The third module or late pathway involves the ergosterol synthesis itself through consecutive reactions that mainly occur in the endoplasmic reticulum (ER) membrane. Firstly, the squalene synthase ERG9 catalyzes the condensation of 2 farnesyl pyrophosphate moieties to form squalene, which is the precursor of all steroids. Squalene synthase is crucial for balancing the incorporation of farnesyl diphosphate (FPP) into sterol and nonsterol isoprene synthesis. Secondly, squalene is converted into lanosterol by the consecutive action of the squalene epoxidase ERG1 and the lanosterol synthase ERG7. Then, the delta(24)-sterol C-methyltransferase ERG6 methylates lanosterol at C-24 to produce eburicol. Eburicol is the substrate of the sterol 14-alpha demethylase encoded by CYP51A, CYP51B and CYP51C, to yield 4,4,24-trimethyl ergosta-8,14,24(28)-trienol. CYP51B encodes the enzyme primarily responsible for sterol 14-alpha-demethylation, and plays an essential role in ascospore formation. CYP51A encodes an additional sterol 14-alpha-demethylase, induced on ergosterol depletion and responsible for the intrinsic variation in azole sensitivity. The third CYP51 isoform, CYP51C, does not encode a sterol 14-alpha-demethylase, but is required for full virulence on host wheat ears. The C-14 reductase ERG24 then reduces the C14=C15 double bond which leads to 4,4-dimethylfecosterol. A sequence of further demethylations at C-4, involving the C-4 demethylation complex containing the C-4 methylsterol oxidases ERG25, the sterol-4-alpha-carboxylate 3-dehydrogenase ERG26 and the 3-keto-steroid reductase ERG27, leads to the production of fecosterol via 4-methylfecosterol. ERG28 has a role as a scaffold to help anchor ERG25, ERG26 and ERG27 to the endoplasmic reticulum. The C-8 sterol isomerase ERG2 then catalyzes the reaction which results in unsaturation at C-7 in the B ring of sterols and thus converts fecosterol to episterol. The sterol-C5-desaturases ERG3A and ERG3BB then catalyze the introduction of a C-5 double bond in the B ring to produce 5-dehydroepisterol. The C-22 sterol desaturases ERG5A and ERG5B further convert 5-dehydroepisterol into ergosta-5,7,22,24(28)-tetraen-3beta-ol by forming the C-22(23) double bond in the sterol side chain. Finally, ergosta-5,7,22,24(28)-tetraen-3beta-ol is substrate of the C-24(28) sterol reductase ERG4 to produce ergosterol. This Gibberella zeae (strain ATCC MYA-4620 / CBS 123657 / FGSC 9075 / NRRL 31084 / PH-1) (Wheat head blight fungus) protein is Delta(14)-sterol reductase ERG24B.